The following is a 575-amino-acid chain: Developmental and secondary metabolism regulator VEL1 (575 aa).

In terms of domain architecture, Velvet spans 21-225 (GRKLKYTLTV…AEQGCRVRIR (205 aa)). Positions 35–40 (ERARAC) match the Nuclear localization signal motif. Disordered regions lie at residues 36–56 (RARA…VDPP) and 227–402 (DVRM…QSYE). Residues 274 to 284 (VHEDPQQRRGS) are compositionally biased toward basic and acidic residues. Residues 294-308 (VVNTPFRTPSISPST) show a composition bias toward polar residues. Pro residues predominate over residues 334–346 (IQPPHPPPPPPSS). Polar residues-rich tracts occupy residues 355–365 (HHNQGPSTQFR) and 385–402 (SYSQ…QSYE). The interval 465-509 (AEQPLAMSPLASVTSISRGTQNSAPMPSHNYNKLERSGSYSQYAP) is PEST. Positions 513-549 (EAPKSTNKRSFNDVFSTPTESLSNGRRPSAIGIDIEE) are disordered. Residues 516–538 (KSTNKRSFNDVFSTPTESLSNGR) show a composition bias toward polar residues.

Belongs to the velvet family. VeA subfamily. As to quaternary structure, component of the heterotrimeric velvet complex composed of LAE1, VEL1 and VEL2; VEL1 acting as a bridging protein between LAE1 and VEL2.

It localises to the nucleus. The protein localises to the cytoplasm. Component of the velvet transcription factor complex that controls sexual/asexual developmental ratio in response to light, promoting sexual development in the darkness while stimulating asexual sporulation under illumination. The velvet complex hat acts as a global regulator for secondary metabolite gene expression. Controls the expression of the oxalic acid and melanin gene clusters. Also controls the expression of proteases and carbohydrate-active enzymes. Involved in the resistance to oxidative stress. Required for full virulence. The sequence is that of Developmental and secondary metabolism regulator VEL1 from Botryotinia fuckeliana (strain B05.10) (Noble rot fungus).